Reading from the N-terminus, the 1420-residue chain is DNA-directed RNA polymerase subunit beta' (1420 aa).

Zn(2+)-binding residues include Cys71, Cys73, Cys86, and Cys89. The Mg(2+) site is built by Asp461, Asp463, and Asp465. 4 residues coordinate Zn(2+): Cys815, Cys889, Cys896, and Cys899.

Belongs to the RNA polymerase beta' chain family. The RNAP catalytic core consists of 2 alpha, 1 beta, 1 beta' and 1 omega subunit. When a sigma factor is associated with the core the holoenzyme is formed, which can initiate transcription. Mg(2+) is required as a cofactor. Zn(2+) serves as cofactor.

It catalyses the reaction RNA(n) + a ribonucleoside 5'-triphosphate = RNA(n+1) + diphosphate. Functionally, DNA-dependent RNA polymerase catalyzes the transcription of DNA into RNA using the four ribonucleoside triphosphates as substrates. In Histophilus somni (strain 129Pt) (Haemophilus somnus), this protein is DNA-directed RNA polymerase subunit beta'.